A 468-amino-acid chain; its full sequence is 6-phosphogluconate dehydrogenase, decarboxylating (468 aa).

NADP(+) contacts are provided by residues 10–15 (GMAVMG), 33–35 (NRS), 74–76 (VKA), and Asn102. Substrate contacts are provided by residues Asn102 and 128-130 (SGG). Catalysis depends on Lys183, which acts as the Proton acceptor. Residue 186 to 187 (HN) participates in substrate binding. Residue Glu190 is the Proton donor of the active site. Positions 191, 260, 287, 445, and 451 each coordinate substrate.

Belongs to the 6-phosphogluconate dehydrogenase family. As to quaternary structure, homodimer.

The enzyme catalyses 6-phospho-D-gluconate + NADP(+) = D-ribulose 5-phosphate + CO2 + NADPH. Its pathway is carbohydrate degradation; pentose phosphate pathway; D-ribulose 5-phosphate from D-glucose 6-phosphate (oxidative stage): step 3/3. Functionally, catalyzes the oxidative decarboxylation of 6-phosphogluconate to ribulose 5-phosphate and CO(2), with concomitant reduction of NADP to NADPH. The polypeptide is 6-phosphogluconate dehydrogenase, decarboxylating (gnd) (Salmonella typhimurium (strain LT2 / SGSC1412 / ATCC 700720)).